The sequence spans 443 residues: Serine transporter (443 aa).

Transmembrane regions (helical) follow at residues 38–60 (TGWV…PVQV), 65–87 (LWVF…RLFI), 111–131 (WGIL…FVYS), 150–170 (GLLS…VAIS), 183–203 (GMVL…VGMW), 215–235 (GLLV…ILFI), 265–285 (IAFG…TLAM), 319–339 (VSVI…YLGF), 368–388 (GIMI…APVL), 390–410 (FTSI…AWLV), and 422–442 (MSLY…FLAF).

Belongs to the amino acid/polyamine transporter 2 family. SdaC/TdcC subfamily.

The protein localises to the cell inner membrane. In terms of biological role, transports both D- and L-serine; allows growth of strain CFT073 cells normally unable to transport D-serine on that substrate. Transport relies on the H(+) gradient and is not competed by L-threonine. May play a role in L-cysteine detoxification. This Escherichia coli O157:H7 protein is Serine transporter.